The primary structure comprises 37 residues: MVEPLLSGVVLGLILVTLSGLFFAAYQQYKRGNQLNG.

The chain crosses the membrane as a helical span at residues 5-25 (LLSGVVLGLILVTLSGLFFAA).

Belongs to the PetG family. In terms of assembly, the 4 large subunits of the cytochrome b6-f complex are cytochrome b6, subunit IV (17 kDa polypeptide, PetD), cytochrome f and the Rieske protein, while the 4 small subunits are PetG, PetL, PetM and PetN. The complex functions as a dimer.

The protein localises to the cellular thylakoid membrane. Its function is as follows. Component of the cytochrome b6-f complex, which mediates electron transfer between photosystem II (PSII) and photosystem I (PSI), cyclic electron flow around PSI, and state transitions. PetG is required for either the stability or assembly of the cytochrome b6-f complex. This chain is Cytochrome b6-f complex subunit 5, found in Trichodesmium erythraeum (strain IMS101).